The sequence spans 485 residues: Aspartyl/glutamyl-tRNA(Asn/Gln) amidotransferase subunit B (485 aa).

It belongs to the GatB/GatE family. GatB subfamily. In terms of assembly, heterotrimer of A, B and C subunits.

It catalyses the reaction L-glutamyl-tRNA(Gln) + L-glutamine + ATP + H2O = L-glutaminyl-tRNA(Gln) + L-glutamate + ADP + phosphate + H(+). The enzyme catalyses L-aspartyl-tRNA(Asn) + L-glutamine + ATP + H2O = L-asparaginyl-tRNA(Asn) + L-glutamate + ADP + phosphate + 2 H(+). Its function is as follows. Allows the formation of correctly charged Asn-tRNA(Asn) or Gln-tRNA(Gln) through the transamidation of misacylated Asp-tRNA(Asn) or Glu-tRNA(Gln) in organisms which lack either or both of asparaginyl-tRNA or glutaminyl-tRNA synthetases. The reaction takes place in the presence of glutamine and ATP through an activated phospho-Asp-tRNA(Asn) or phospho-Glu-tRNA(Gln). The chain is Aspartyl/glutamyl-tRNA(Asn/Gln) amidotransferase subunit B from Opitutus terrae (strain DSM 11246 / JCM 15787 / PB90-1).